The primary structure comprises 529 residues: Delayed-rectifier potassium channel regulatory subunit KCNS1 (529 aa).

Over 1–217 (MLMLLVRGTH…LTMENPGYSL (217 aa)) the chain is Cytoplasmic. A helical membrane pass occupies residues 218 to 239 (PSKLFSCVSIGVVLASIAAMCI). Residues 240-270 (HSLPEYQAREAAAAVATVAAGRSAEDVRDDP) lie on the Extracellular side of the membrane. The helical transmembrane segment at 271 to 293 (VLRRLEYFCIAWFSFEVSSRLLL) threads the bilayer. The Cytoplasmic portion of the chain corresponds to 294-304 (APSTRNFFCHP). A helical transmembrane segment spans residues 305-322 (LNLIDIVSVLPFYLTLLA). The Extracellular segment spans residues 323 to 342 (SVALGGNNHGGTSGEELGHL). Residues 343–363 (GKVVQVFRLMRIFRVLKLARH) traverse the membrane as a helical; Voltage-sensor segment. The Cytoplasmic portion of the chain corresponds to 364–378 (STGLRSLGATLKHSY). The helical transmembrane segment at 379–400 (REVGILLLYLAVGVSVFSGVAY) threads the bilayer. Residues 401 to 413 (TAEKEEDVGFDTI) are Extracellular-facing. Residues 414–425 (PACWWWGTVSMT) constitute an intramembrane region (helical). A Selectivity filter motif is present at residues 426–431 (TVGYGD). An intramembrane segment occupies 426–433 (TVGYGDVV). The Extracellular portion of the chain corresponds to 434–440 (PVTLAGK). Residues 441–469 (LAASGCILGGILVVALPITIIFNKFSHFY) traverse the membrane as a helical segment. Residues 470-529 (QRQKALEAAVRNSGHREFEDLLSSVDGVSDASLETSRETSQEGRSADLEAPSESPKPQIY) lie on the Cytoplasmic side of the membrane. Residues 498–529 (SDASLETSRETSQEGRSADLEAPSESPKPQIY) form a disordered region. The span at 504–516 (TSRETSQEGRSAD) shows a compositional bias: basic and acidic residues.

It belongs to the potassium channel family. S (TC 1.A.1.2) subfamily. Kv9.1/KCNS1 sub-subfamily. Heterotetramer with KCNB1. Heterotetramer with KCNB2. Does not form homomultimers.

The protein resides in the cell membrane. In terms of biological role, potassium channel regulatory subunit that modulate the delayed rectifier voltage-gated potassium channel activity of KCNB1 and KCNB2 by altering their kinetics, expression levels, and shifting the half-inactivation potential to more polarized values. While it does not form functional channels on its own, it can form functional heterotetrameric channels with KCNB1 and KCNB2. Each regulatory subunit has unique regulatory properties that can lead to extensive inhibition, significant changes in kinetics, and/or substantial shifts in the voltage dependencies of the inactivation process. The sequence is that of Delayed-rectifier potassium channel regulatory subunit KCNS1 from Lemur catta (Ring-tailed lemur).